Reading from the N-terminus, the 152-residue chain is Protein-export protein SecB (152 aa).

The protein belongs to the SecB family. Homotetramer, a dimer of dimers. One homotetramer interacts with 1 SecA dimer.

The protein resides in the cytoplasm. In terms of biological role, one of the proteins required for the normal export of preproteins out of the cell cytoplasm. It is a molecular chaperone that binds to a subset of precursor proteins, maintaining them in a translocation-competent state. It also specifically binds to its receptor SecA. This Rickettsia typhi (strain ATCC VR-144 / Wilmington) protein is Protein-export protein SecB.